The following is a 43-amino-acid chain: Defensin (43 aa).

Cystine bridges form between C3-C34, C20-C39, and C24-C41.

This sequence belongs to the invertebrate defensin family. Type 1 subfamily.

It localises to the secreted. Antibacterial peptide. Affects Gram-positive bacteria M.luteus, B.megaterium, A.viridans, S.aureus and S.saprophyticus. Moderate activity against P.acidilactici and B.subtilis QB935. Also affects Gram-negative bacterium, D22 form of E.coli. The polypeptide is Defensin (Pyrrhocoris apterus (Sap sucking bug)).